Here is a 217-residue protein sequence, read N- to C-terminus: MTDPNKMIINLALFGMTQSGKSSAGNILLGSTDFHSSFAPCSVTTCCSLGRSCHLHSFMRRGGLEVALQVQVLDTPGYPHSRLSKKYVKQEVKEALAHHFGQGGLHLALLVQRADVPFCGQEVTDPVQMIQELLGHAWMNYTAILFTHAEKIEEAGLTEDKYLHEASDTLKTLLNSIQHKYVFQYKKGKSLNEQRMKILERIMEFIKENCYQVLTFK.

The AIG1-type G domain occupies 6 to 217 (KMIINLALFG…ENCYQVLTFK (212 aa)). GTP-binding positions include 15-23 (GMTQSGKSS), Ser36, and 148-150 (HAE).

This sequence belongs to the TRAFAC class TrmE-Era-EngA-EngB-Septin-like GTPase superfamily. AIG1/Toc34/Toc159-like paraseptin GTPase family. IAN subfamily.

The protein is GTPase IMAP family member GIMD1 (GIMD1) of Homo sapiens (Human).